We begin with the raw amino-acid sequence, 321 residues long: Olfactory receptor 51V1 (321 aa).

The Extracellular segment spans residues 1–34; sequence MFLSSRMITSVSPSTSTNSSFLLTGFSGMEQQYP. Asn-18 carries an N-linked (GlcNAc...) asparagine glycan. Residues 35–55 traverse the membrane as a helical segment; it reads WLSIPFSSIYAMVLLGNCMVL. The Cytoplasmic segment spans residues 56–63; the sequence is HVIWTEPS. A helical transmembrane segment spans residues 64-84; it reads LHQPMFYFLSMLALTDLCMGL. Topologically, residues 85-108 are extracellular; that stretch reads STVYTVLGILWGIIREISLDSCIA. Residues Cys-106 and Cys-188 are joined by a disulfide bond. Residues 109 to 129 traverse the membrane as a helical segment; it reads QSYFIHGLSFMESSVLLTMAF. Residues 130–148 are Cytoplasmic-facing; it reads DRYIAICNPLRYSSILTNS. Residues 149–169 form a helical membrane-spanning segment; the sequence is RIIKIGLTIIGRSFFFITPPI. Residues 170–205 lie on the Extracellular side of the membrane; sequence ICLKFFNYCHFHILSHSFCLHQDLLRLACSDIRFNS. The chain crosses the membrane as a helical span at residues 206–226; that stretch reads YYALMLVICILLLDAILILFS. At 227-246 the chain is on the cytoplasmic side; the sequence is YILILKSVLAVASQEERHKL. The chain crosses the membrane as a helical span at residues 247 to 267; it reads FQTCISHICAVLVFYIPIISL. Residues 268 to 282 lie on the Extracellular side of the membrane; it reads TMVHRFGKHLSPVAH. A helical membrane pass occupies residues 283-303; that stretch reads VLIGNIYILFPPLMNPIIYSV. Over 304-321 the chain is Cytoplasmic; sequence KTQQIHTRMLRLFSLKRY.

This sequence belongs to the G-protein coupled receptor 1 family.

The protein localises to the cell membrane. In terms of biological role, odorant receptor. The chain is Olfactory receptor 51V1 (OR51V1) from Homo sapiens (Human).